A 183-amino-acid chain; its full sequence is Large ribosomal subunit protein uL10 (183 aa).

Belongs to the universal ribosomal protein uL10 family. In terms of assembly, part of the ribosomal stalk of the 50S ribosomal subunit. The N-terminus interacts with L11 and the large rRNA to form the base of the stalk. The C-terminus forms an elongated spine to which L12 dimers bind in a sequential fashion forming a multimeric L10(L12)X complex.

Forms part of the ribosomal stalk, playing a central role in the interaction of the ribosome with GTP-bound translation factors. This Mesomycoplasma hyopneumoniae (strain 232) (Mycoplasma hyopneumoniae) protein is Large ribosomal subunit protein uL10.